A 506-amino-acid polypeptide reads, in one-letter code: Bifunctional purine biosynthesis protein PurH (506 aa).

Residues 1-146 (MARLALLSVS…KNFAHLTVLC (146 aa)) enclose the MGS-like domain.

Belongs to the PurH family.

It catalyses the reaction (6R)-10-formyltetrahydrofolate + 5-amino-1-(5-phospho-beta-D-ribosyl)imidazole-4-carboxamide = 5-formamido-1-(5-phospho-D-ribosyl)imidazole-4-carboxamide + (6S)-5,6,7,8-tetrahydrofolate. The enzyme catalyses IMP + H2O = 5-formamido-1-(5-phospho-D-ribosyl)imidazole-4-carboxamide. It participates in purine metabolism; IMP biosynthesis via de novo pathway; 5-formamido-1-(5-phospho-D-ribosyl)imidazole-4-carboxamide from 5-amino-1-(5-phospho-D-ribosyl)imidazole-4-carboxamide (10-formyl THF route): step 1/1. Its pathway is purine metabolism; IMP biosynthesis via de novo pathway; IMP from 5-formamido-1-(5-phospho-D-ribosyl)imidazole-4-carboxamide: step 1/1. The polypeptide is Bifunctional purine biosynthesis protein PurH (Nostoc sp. (strain PCC 7120 / SAG 25.82 / UTEX 2576)).